The sequence spans 118 residues: IgW heavy chain V region W26 (118 aa).

The Ig-like domain occupies N1–T109. A disulfide bond links C22 and C93.

In terms of tissue distribution, expressed mainly in lymphoid tissues including spleen, epigonal organ and circulating lymphocytes.

In Heterodontus francisci (Horn shark), this protein is IgW heavy chain V region W26.